The sequence spans 180 residues: Small ribosomal subunit protein uS4 (180 aa).

An S4 RNA-binding domain is found at 103–165 (RRLQTIVYRK…KGSPFAKEGH (63 aa)).

It belongs to the universal ribosomal protein uS4 family. As to quaternary structure, part of the 30S ribosomal subunit. Contacts protein S5. The interaction surface between S4 and S5 is involved in control of translational fidelity.

Its function is as follows. One of the primary rRNA binding proteins, it binds directly to 16S rRNA where it nucleates assembly of the body of the 30S subunit. With S5 and S12 plays an important role in translational accuracy. The polypeptide is Small ribosomal subunit protein uS4 (Thermococcus kodakarensis (strain ATCC BAA-918 / JCM 12380 / KOD1) (Pyrococcus kodakaraensis (strain KOD1))).